The sequence spans 908 residues: Pre-mRNA-splicing factor CWC22 homolog (908 aa).

Positions 1–10 (MKSSVAQIKP) are enriched in polar residues. A disordered region spans residues 1–129 (MKSSVAQIKP…DELDPLLTRT (129 aa)). Residues 28–56 (SPEDRYEEQERSPRDRDYFDYSRSDYEHS) are compositionally biased toward basic and acidic residues. Residues S39 and S61 each carry the phosphoserine modification. Residues 66-85 (MESRNRDREKRRERERDTDR) show a composition bias toward basic and acidic residues. The segment covering 100–110 (ETSVTQSSSAQ) has biased composition (polar residues). Position 107 is a phosphoserine (S107). Positions 113–122 (PATKKKKDEL) are enriched in basic and acidic residues. The 184-residue stretch at 163–346 (KKSINGLINK…EVMFAVRKDG (184 aa)) folds into the MIF4G domain. Positions 404–443 (EILDEGDTDSNTDQDAGSSEEDEEEEEEEGEEDEEGQKVT) are disordered. Residues 407-438 (DEGDTDSNTDQDAGSSEEDEEEEEEEGEEDEE) are compositionally biased toward acidic residues. In terms of domain architecture, MI spans 454–570 (SFRRTIYLAI…PWSVLECIKL (117 aa)). The disordered stretch occupies residues 654–908 (IVAQKPDVEQ…RREKSPAKQK (255 aa)). 2 stretches are compositionally biased toward low complexity: residues 666-680 (SSPS…SSES) and 703-714 (SSSISSHSSASA). Over residues 726-770 (RSKEVDKLIRNQQTNDRKQKERRQEHGHQETRTERERRSEKHRDQ) the composition is skewed to basic and acidic residues. Phosphoserine is present on S786. Basic and acidic residues-rich tracts occupy residues 801–817 (ANDR…NKHG) and 826–908 (RRNS…AKQK). Position 829 is a phosphoserine (S829).

The protein belongs to the CWC22 family. Component of the pre-catalytic spliceosome B and the catalytic spliceosome C complexes. Component of the minor spliceosome, which splices U12-type introns. Interacts with EIF4A3 and PRPF19 in an RNA-independent manner. Direct interaction with EIF4A3 is mediated by the MIF4G domain. Full interaction with EIF4A3 occurs only when EIF4A3 is not part of the EJC and prevents EIF4A3 binding to RNA.

Its subcellular location is the nucleus. It localises to the nucleus speckle. In terms of biological role, required for pre-mRNA splicing as component of the spliceosome. As a component of the minor spliceosome, involved in the splicing of U12-type introns in pre-mRNAs. Promotes exon-junction complex (EJC) assembly. Hinders EIF4A3 from non-specifically binding RNA and escorts it to the splicing machinery to promote EJC assembly on mature mRNAs. Through its role in EJC assembly, required for nonsense-mediated mRNA decay. The protein is Pre-mRNA-splicing factor CWC22 homolog (CWC22) of Homo sapiens (Human).